A 400-amino-acid chain; its full sequence is Cytochrome P450 BJ-1 homolog (400 aa).

Cys-349 lines the heme pocket.

It belongs to the cytochrome P450 family. Heme is required as a cofactor.

In terms of biological role, cytochromes P450 are a group of heme-thiolate monooxygenases. They oxidize a variety of structurally unrelated compounds, including steroids, fatty acids, and xenobiotics. This chain is Cytochrome P450 BJ-1 homolog (cyp112A2), found in Sinorhizobium fredii (strain NBRC 101917 / NGR234).